The primary structure comprises 83 residues: uncharacterized protein (83 aa).

This is an uncharacterized protein from Escherichia phage Bf23 (Enterobacteria phage BF23).